Consider the following 207-residue polypeptide: MSQQAETTDIKKKILSTGIRVGTQVKTKFMRPFITKASPEGLYMLDLDITLDKIKTAAKFINRLGVENLIVCSGRQYAETPIEKFCETLGSKKLLGRFMPGTLTNPSLPYYIEPKLVLISDPQVDEQAITEATNAGIPVIGIANTDNITSNLDVIIPANNRGRKALATVYWLLVRQILIEKGELKEEDPMNIEIDDFETKITEEEIE.

This sequence belongs to the universal ribosomal protein uS2 family.

The sequence is that of Small ribosomal subunit protein uS2 from Nitrosopumilus maritimus (strain SCM1).